The chain runs to 71 residues: Gas vesicle protein A (71 aa).

Positions 12-22 (LAEVIDRILDK) are alpha helix 1. Residues 26-34 (VDAWVRVSL) are beta-strand 1. The beta turn stretch occupies residues 35-37 (VGI). Positions 38–46 (ELLAIEARI) are beta-strand 2. An alpha helix 2 region spans residues 51–70 (VETYLKYAEAVGLTQSAAVP).

It belongs to the gas vesicle GvpA family. The gas vesicle shell is 2 nm thick and consists of a single layer of this protein. It forms helical ribs nearly perpendicular to the long axis of the vesicle.

Its subcellular location is the gas vesicle shell. In terms of biological role, gas vesicles are hollow, gas filled proteinaceous nanostructures found in some microorganisms. During planktonic growth they allow positioning of the organism at a favorable depth for light or nutrient acquisition. GvpA forms the protein shell. This Microchaete diplosiphon (Fremyella diplosiphon) protein is Gas vesicle protein A.